Consider the following 396-residue polypeptide: MANKKVTFREDVKSPAIRKLKQKLTPLKIKKGRGKIQKHIQKTLQKMKEEEESENQSPGTTVEETLTEENISTDKEETSKLENKPKKTRKTSGETIAQKKSRETVGVEVLKTSEGSSKMLGFHVSAAGGLEQAIYNARAEGCRSFAMFVRNQRTWNHKPMSEEVVENWWKAVRETNFPLDQIVPHGSYLMNAGSPEAEKLEKSRLAMLDECQRAEKLGITMYNFHPGSTVGKCEKEECMTTIAETIDFVVEKTENIILVLETMAGQGNSIGGTFEELKFIIDKVKVKSRVGVCIDTCHIFAGGYDIRTQKAYEEVMKNFGEVVGWNYLKAIHINDSKGDVGSKLDRHEHIGQGKIGKAAFELLMNDNRLDGIPMILETPEGKYPEEMMIMYNMDKR.

Over residues 31–41 (KGRGKIQKHIQ) the composition is skewed to basic residues. The interval 31–100 (KGRGKIQKHI…TSGETIAQKK (70 aa)) is disordered. The span at 55–70 (NQSPGTTVEETLTEEN) shows a compositional bias: polar residues. Over residues 72–85 (STDKEETSKLENKP) the composition is skewed to basic and acidic residues. 9 residues coordinate Zn(2+): His185, His225, Glu261, Asp295, His298, His332, Asp345, His347, and Glu377.

This sequence belongs to the AP endonuclease 2 family. Zn(2+) serves as cofactor.

Its subcellular location is the nucleus. The chain is Apurinic-apyrimidinic endonuclease (apn-1) from Caenorhabditis elegans.